Reading from the N-terminus, the 556-residue chain is MARKGNPISVRLGKNRSSDSSWFSDYYYGKFVYQDVNLRSYFGSIRPPTRLTFGFRLGRCIILHFPKRTFIHFFLPRRPRRLKRREKTRPGKEKGRWWTTFGKAGPIECLHSSDDTEEERNEVRGRGARKRVESIRLDDRKKQNEIRGWPKKKQRYGYHDRLPSIKKNLSKLLRISGAFKHPKYAGVVNDIAFLIENDDSFKKTKLFKLFFQNKSRSDGPTSYLRTLPAVRPSLNFLVMQYFFNTKNQINFDPVVVLNHFVAPGAAEPSTMGRANAQGRSLQKRIRSRIAFFVESLTSEKKCLAEAKNRLTHFIRLANDLRFAGTTKTTISLFPFFGATFFFLRDGVGVYNNLDAREQLLNQLRVKCWNLVGKDKIMELIEKLKNLGGIEELIKVIDMMIEIILRKRGIPYRYNSYFYEVKKMRSFLSNRTNTKTLIESVKIKSVYQSASLIAQDISFQLKNKRRSFHSIFAKIVKEIPKGVEGIRICFSGRLKDAAEKAQTKCYKHRKTSCNVFNHKIDYAPVEVFTRYGILGVKVWISYSQKKGRRAISETYEI.

Belongs to the universal ribosomal protein uS3 family. As to quaternary structure, component of the mitochondrial ribosome small subunit.

It is found in the mitochondrion. The sequence is that of Small ribosomal subunit protein uS3m (RPS3) from Arabidopsis thaliana (Mouse-ear cress).